A 384-amino-acid chain; its full sequence is MGLLCSRNRRYNDADAEENAQAAEIERRIELETKAEKHIQKLLLLGAGESGKSTIFKQIKLLFQTGFDEAELKSYLPVIHANVFQTIKLLHDGSKELAQNDVDSSKYVISDENKDIGEKLSEIGSKLDYPYLTTELAKEIETLWEDAAIQETYARGNELQVPGCAHYFMENLQRLSDANYVPTKEDVLYARVRTTGVVEIQFSPVGENKRSGEVYRLFDVGGQRNERRKWIHLFEGVSAVIFCAAISEYDQTLFEDENKNRMTETKELFEWILKQPCFEKTSFMLFLNKFDIFEKKILKVPLNVCEWFKDYQPVSTGKQEIEHAYEFVKKKFEELYFQSTAPERVDRVFKVYRTTALDQKLIKKTFKLVDESLRRRNLFEAGLL.

Glycine 2 is lipidated: N-myristoyl glycine. The S-palmitoyl cysteine moiety is linked to residue cysteine 5. The G-alpha domain maps to 38 to 384; sequence HIQKLLLLGA…RRNLFEAGLL (347 aa). The segment at 41-54 is G1 motif; the sequence is KLLLLGAGESGKST. Positions 49, 50, 51, 52, 53, 54, 188, 189, 194, 222, 288, 289, 291, and 356 each coordinate GTP. Serine 53 contacts Mg(2+). The segment at 186 to 194 is G2 motif; it reads DVLYARVRT. Threonine 194 provides a ligand contact to Mg(2+). Residues 215 to 224 are G3 motif; that stretch reads YRLFDVGGQR. The tract at residues 284 to 291 is G4 motif; it reads MLFLNKFD. A G5 motif region spans residues 354 to 359; that stretch reads TTALDQ.

Belongs to the G-alpha family. G proteins are composed of 3 units; alpha, beta and gamma. The alpha chain contains the guanine nucleotide binding site. Mg(2+) is required as a cofactor.

Functionally, guanine nucleotide-binding proteins (G proteins) are involved as modulators or transducers in various transmembrane signaling systems. The sequence is that of Guanine nucleotide-binding protein alpha-1 subunit (GPA1) from Lupinus luteus (European yellow lupine).